The primary structure comprises 100 residues: Large ribosomal subunit protein uL23 (100 aa).

This sequence belongs to the universal ribosomal protein uL23 family. As to quaternary structure, part of the 50S ribosomal subunit. Contacts protein L29, and trigger factor when it is bound to the ribosome.

Functionally, one of the early assembly proteins it binds 23S rRNA. One of the proteins that surrounds the polypeptide exit tunnel on the outside of the ribosome. Forms the main docking site for trigger factor binding to the ribosome. The chain is Large ribosomal subunit protein uL23 from Mycolicibacterium paratuberculosis (strain ATCC BAA-968 / K-10) (Mycobacterium paratuberculosis).